Here is a 397-residue protein sequence, read N- to C-terminus: UPF0761 membrane protein Kkor_1635 (397 aa).

6 helical membrane passes run 36–56, 92–112, 132–152, 168–188, 201–221, and 237–257; these read MLAL…FPSF, NLSA…MRSI, ILAY…SLAA, ILTF…LYMV, IAAV…AIFV, and IPIF…GVIV.

Belongs to the UPF0761 family.

The protein resides in the cell inner membrane. This is UPF0761 membrane protein Kkor_1635 from Kangiella koreensis (strain DSM 16069 / JCM 12317 / KCTC 12182 / SW-125).